Reading from the N-terminus, the 299-residue chain is Ciliary microtubule inner protein 2B (299 aa).

This sequence belongs to the CIMIP2 family. In terms of tissue distribution, expressed in airway epithelial cells.

It is found in the cytoplasm. Its subcellular location is the cytoskeleton. It localises to the cilium axoneme. Microtubule inner protein (MIP) part of the dynein-decorated doublet microtubules (DMTs) in cilia axoneme, which is required for motile cilia beating. In Danio rerio (Zebrafish), this protein is Ciliary microtubule inner protein 2B (cimip2b).